The chain runs to 270 residues: Formamidopyrimidine-DNA glycosylase (270 aa).

Catalysis depends on proline 2, which acts as the Schiff-base intermediate with DNA. The active-site Proton donor is glutamate 3. Residue lysine 58 is the Proton donor; for beta-elimination activity of the active site. Positions 91, 110, and 151 each coordinate DNA. The FPG-type zinc finger occupies 236-270 (LVYGRDGLPCPNCGRALKHATIGQRASVWCSHCQR). Catalysis depends on arginine 260, which acts as the Proton donor; for delta-elimination activity.

Belongs to the FPG family. In terms of assembly, monomer. Zn(2+) is required as a cofactor.

It catalyses the reaction Hydrolysis of DNA containing ring-opened 7-methylguanine residues, releasing 2,6-diamino-4-hydroxy-5-(N-methyl)formamidopyrimidine.. It carries out the reaction 2'-deoxyribonucleotide-(2'-deoxyribose 5'-phosphate)-2'-deoxyribonucleotide-DNA = a 3'-end 2'-deoxyribonucleotide-(2,3-dehydro-2,3-deoxyribose 5'-phosphate)-DNA + a 5'-end 5'-phospho-2'-deoxyribonucleoside-DNA + H(+). Functionally, involved in base excision repair of DNA damaged by oxidation or by mutagenic agents. Acts as a DNA glycosylase that recognizes and removes damaged bases. Has a preference for oxidized purines, such as 7,8-dihydro-8-oxoguanine (8-oxoG). Has AP (apurinic/apyrimidinic) lyase activity and introduces nicks in the DNA strand. Cleaves the DNA backbone by beta-delta elimination to generate a single-strand break at the site of the removed base with both 3'- and 5'-phosphates. The protein is Formamidopyrimidine-DNA glycosylase of Stenotrophomonas maltophilia (strain K279a).